The following is a 495-amino-acid chain: UDP-glycosyltransferase 73C25 (495 aa).

23–26 (GHMI) is a UDP-alpha-D-glucose binding site. The Proton acceptor role is filled by H24. The Charge relay role is filled by D129. Residues 355–358 (WSPQ), 373–381 (HCGWNSTLE), and 397–398 (DQ) contribute to the UDP-alpha-D-glucose site.

This sequence belongs to the UDP-glycosyltransferase family.

Its function is as follows. Catalyzes the transfer of a glucose (Glc) moiety from UDP-Glc to the C-28 carboxylic group of oleanolate 3-O-beta-D-glucoside to form oleanolate 3,28-O-beta-D-diglucoside. The sequence is that of UDP-glycosyltransferase 73C25 from Barbarea vulgaris (Yellow rocket).